Consider the following 254-residue polypeptide: Triosephosphate isomerase (254 aa).

9-11 serves as a coordination point for substrate; that stretch reads NWK. The Electrophile role is filled by His-96. Glu-168 acts as the Proton acceptor in catalysis. Residues Gly-174 and Ser-213 each contribute to the substrate site.

The protein belongs to the triosephosphate isomerase family. Homodimer.

The protein localises to the cytoplasm. The enzyme catalyses D-glyceraldehyde 3-phosphate = dihydroxyacetone phosphate. The protein operates within carbohydrate biosynthesis; gluconeogenesis. Its pathway is carbohydrate degradation; glycolysis; D-glyceraldehyde 3-phosphate from glycerone phosphate: step 1/1. Functionally, involved in the gluconeogenesis. Catalyzes stereospecifically the conversion of dihydroxyacetone phosphate (DHAP) to D-glyceraldehyde-3-phosphate (G3P). The chain is Triosephosphate isomerase from Buchnera aphidicola subsp. Schizaphis graminum (strain Sg).